The primary structure comprises 290 residues: Small ribosomal subunit biogenesis GTPase RsgA (290 aa).

The 152-residue stretch at 62–213 (KNSLVRPPIV…IADTPGFSSL (152 aa)) folds into the CP-type G domain. GTP is bound by residues 111–114 (SKLD) and 156–164 (GQTGVGKST). Residues Cys237, Cys242, His244, and Cys250 each contribute to the Zn(2+) site.

Belongs to the TRAFAC class YlqF/YawG GTPase family. RsgA subfamily. In terms of assembly, monomer. Associates with 30S ribosomal subunit, binds 16S rRNA. It depends on Zn(2+) as a cofactor.

The protein resides in the cytoplasm. In terms of biological role, one of several proteins that assist in the late maturation steps of the functional core of the 30S ribosomal subunit. Helps release RbfA from mature subunits. May play a role in the assembly of ribosomal proteins into the subunit. Circularly permuted GTPase that catalyzes slow GTP hydrolysis, GTPase activity is stimulated by the 30S ribosomal subunit. This is Small ribosomal subunit biogenesis GTPase RsgA from Streptococcus agalactiae serotype V (strain ATCC BAA-611 / 2603 V/R).